A 123-amino-acid polypeptide reads, in one-letter code: Cholecystokinin A (123 aa).

An N-terminal signal peptide occupies residues 1 to 20; sequence MYSGICICLLLAMLSASSKA. Residues 21-103 constitute a propeptide that is removed on maturation; that stretch reads HQSEDAVVTE…FDQPHRINDR (83 aa). Sulfotyrosine is present on Y105. F111 bears the Phenylalanine amide mark. Positions 115 to 123 are excised as a propeptide; that stretch reads SAEEYEYSS.

Belongs to the gastrin/cholecystokinin family. The precursor is cleaved by proteases to produce a number of active cholecystokinins. As to expression, brain, gastrointestinal tract and lung.

Its subcellular location is the secreted. The chain is Cholecystokinin A (cck-a) from Xenopus laevis (African clawed frog).